We begin with the raw amino-acid sequence, 81 residues long: Small cysteine-rich protein 4 (81 aa).

The N-terminal stretch at 1–23 (MDTKVACLLLIILGALTVQGAVS) is a signal peptide. The propeptide occupies 24 to 25 (GN).

The protein belongs to the Cnidaria small cysteine-rich protein (SCRiP) family. beta subfamily. In terms of processing, contains 4 disulfide bonds.

It is found in the secreted. The protein localises to the nematocyst. Induces neurotoxic symptoms on zebrafish. Has also been claimed to be implied in calcification, but tests on homolog proteins suggest that proteins of this family have a neurotoxic function and not a calcification function. The protein is Small cysteine-rich protein 4 of Orbicella faveolata (Mountainous star coral).